Reading from the N-terminus, the 417-residue chain is Serine/threonine-protein kinase PkaB (417 aa).

The region spanning 9-270 is the Protein kinase domain; the sequence is YTAHQILGRG…ELSARLRELL (262 aa). Residues 15–23 and Lys-36 each bind ATP; that span reads LGRGSAGTV. The active-site Proton acceptor is Asp-130. Disordered regions lie at residues 279–371 and 395–417; these read LDVD…RAAT and LATGGDEDGGGPQDTRNSAPAAP. Residues 280-293 are compositionally biased toward acidic residues; that stretch reads DVDEPDAEQPEDAP. Composition is skewed to low complexity over residues 294–308 and 349–368; these read DASAASPAAPVSTAE and GTARAPRASGAPRPGSARNR. The segment covering 408–417 has biased composition (polar residues); sequence DTRNSAPAAP.

Belongs to the protein kinase superfamily. Ser/Thr protein kinase family. Autophosphorylated mainly at Thr.

It carries out the reaction L-seryl-[protein] + ATP = O-phospho-L-seryl-[protein] + ADP + H(+). It catalyses the reaction L-threonyl-[protein] + ATP = O-phospho-L-threonyl-[protein] + ADP + H(+). The polypeptide is Serine/threonine-protein kinase PkaB (pkaB) (Streptomyces coelicolor (strain ATCC BAA-471 / A3(2) / M145)).